The primary structure comprises 652 residues: Probable protein phosphatase 2C 19 (652 aa).

Residues 265–517 (KYVVSSMQGW…DNTTVILVLF (253 aa)) enclose the PPM-type phosphatase domain. 4 residues coordinate Mn(2+): D300, G301, E467, and D508. Residues 524–567 (AVPPVDTDTDTDSHTGDDVDNNDPANEVDPTANAGSDDSNTSDE) are disordered.

The protein belongs to the PP2C family. Requires Mg(2+) as cofactor. It depends on Mn(2+) as a cofactor.

It carries out the reaction O-phospho-L-seryl-[protein] + H2O = L-seryl-[protein] + phosphate. The catalysed reaction is O-phospho-L-threonyl-[protein] + H2O = L-threonyl-[protein] + phosphate. This Oryza sativa subsp. japonica (Rice) protein is Probable protein phosphatase 2C 19.